A 575-amino-acid chain; its full sequence is Sodium/calcium exchanger NCL2 (575 aa).

A run of 3 helical transmembrane segments spans residues 69–89 (FLPC…YGFL), 112–132 (IVGG…LILV), and 146–166 (VLIG…LLWG). An N-linked (GlcNAc...) asparagine glycan is attached at N179. 2 helical membrane passes run 210–230 (IMAI…FKLH) and 237–257 (VLIG…YQVF). EF-hand domains follow at residues 297–332 (PNVS…INFE) and 337–372 (NSNL…WLDE). A glycan (N-linked (GlcNAc...) asparagine) is linked at N298. The Ca(2+) site is built by D310, D312, D314, K316, E321, D350, S352, N354, and E361. Transmembrane regions (helical) follow at residues 417–437 (WTCI…AASA), 457–477 (FISF…SAII), 494–514 (VYGG…ALVY), 522–542 (FSSE…FTSF), and 548–568 (LWTC…VYIL).

Belongs to the Ca(2+):cation antiporter (CaCA) (TC 2.A.19) family.

It localises to the cell membrane. In terms of biological role, may function as a sodium/calcium exchanger (NCX) and participate in the maintenance of calcium homeostasis. May play a role abiotic stress responses. The polypeptide is Sodium/calcium exchanger NCL2 (Oryza sativa subsp. japonica (Rice)).